The chain runs to 124 residues: Small ribosomal subunit protein uS13 (124 aa).

The segment at 95–124 is disordered; that stretch reads GLPVRGQRTKTNARTRKGPKRTIAGKKKAR.

The protein belongs to the universal ribosomal protein uS13 family. Part of the 30S ribosomal subunit. Forms a loose heterodimer with protein S19. Forms two bridges to the 50S subunit in the 70S ribosome.

Its function is as follows. Located at the top of the head of the 30S subunit, it contacts several helices of the 16S rRNA. In the 70S ribosome it contacts the 23S rRNA (bridge B1a) and protein L5 of the 50S subunit (bridge B1b), connecting the 2 subunits; these bridges are implicated in subunit movement. Contacts the tRNAs in the A and P-sites. The sequence is that of Small ribosomal subunit protein uS13 from Mycobacterium marinum (strain ATCC BAA-535 / M).